We begin with the raw amino-acid sequence, 426 residues long: Probable imidazolonepropionase (426 aa).

The 4-imidazolone-5-propanoate site is built by Tyr-159 and His-192. Tyr-159 provides a ligand contact to N-formimidoyl-L-glutamate. His-260 lines the Fe(3+) pocket. His-260 is a Zn(2+) binding site. Glu-263 contributes to the 4-imidazolone-5-propanoate binding site. Residue Asp-334 participates in Fe(3+) binding. Asp-334 is a binding site for Zn(2+). Asn-336 contributes to the N-formimidoyl-L-glutamate binding site.

This sequence belongs to the metallo-dependent hydrolases superfamily. HutI family. The cofactor is Zn(2+). Fe(3+) is required as a cofactor.

It catalyses the reaction 4-imidazolone-5-propanoate + H2O = N-formimidoyl-L-glutamate. It functions in the pathway amino-acid degradation; L-histidine degradation into L-glutamate; N-formimidoyl-L-glutamate from L-histidine: step 3/3. This Mus musculus (Mouse) protein is Probable imidazolonepropionase (Amdhd1).